A 277-amino-acid polypeptide reads, in one-letter code: Thymidylate synthase (277 aa).

DUMP is bound at residue Arg21. His51 serves as a coordination point for (6R)-5,10-methylene-5,6,7,8-tetrahydrofolate. Residue 126-127 participates in dUMP binding; that stretch reads RR. Residue Cys159 is the Nucleophile of the active site. Residues 179 to 182, Asn190, and 220 to 222 contribute to the dUMP site; these read RSAD and HLY. (6R)-5,10-methylene-5,6,7,8-tetrahydrofolate is bound at residue Asp182. Ala276 contributes to the (6R)-5,10-methylene-5,6,7,8-tetrahydrofolate binding site.

This sequence belongs to the thymidylate synthase family. Bacterial-type ThyA subfamily. In terms of assembly, homodimer.

It is found in the cytoplasm. The enzyme catalyses dUMP + (6R)-5,10-methylene-5,6,7,8-tetrahydrofolate = 7,8-dihydrofolate + dTMP. Its pathway is pyrimidine metabolism; dTTP biosynthesis. In terms of biological role, catalyzes the reductive methylation of 2'-deoxyuridine-5'-monophosphate (dUMP) to 2'-deoxythymidine-5'-monophosphate (dTMP) while utilizing 5,10-methylenetetrahydrofolate (mTHF) as the methyl donor and reductant in the reaction, yielding dihydrofolate (DHF) as a by-product. This enzymatic reaction provides an intracellular de novo source of dTMP, an essential precursor for DNA biosynthesis. In Thioalkalivibrio sulfidiphilus (strain HL-EbGR7), this protein is Thymidylate synthase.